Consider the following 385-residue polypeptide: Glutamate 5-kinase (385 aa).

Lys17 lines the ATP pocket. Residues Ser64, Asp151, and Asn165 each coordinate substrate. An ATP-binding site is contributed by 185–186; sequence SD. Residues 291–367 enclose the PUA domain; sequence SGTVRVDAGA…DQIENVLGYS (77 aa).

It belongs to the glutamate 5-kinase family.

It localises to the cytoplasm. The enzyme catalyses L-glutamate + ATP = L-glutamyl 5-phosphate + ADP. The protein operates within amino-acid biosynthesis; L-proline biosynthesis; L-glutamate 5-semialdehyde from L-glutamate: step 1/2. Catalyzes the transfer of a phosphate group to glutamate to form L-glutamate 5-phosphate. In Methanosarcina mazei (strain ATCC BAA-159 / DSM 3647 / Goe1 / Go1 / JCM 11833 / OCM 88) (Methanosarcina frisia), this protein is Glutamate 5-kinase.